A 434-amino-acid chain; its full sequence is Glutamate-1-semialdehyde 2,1-aminomutase 1 (434 aa).

Lys268 bears the N6-(pyridoxal phosphate)lysine mark.

This sequence belongs to the class-III pyridoxal-phosphate-dependent aminotransferase family. HemL subfamily. As to quaternary structure, homodimer. Pyridoxal 5'-phosphate serves as cofactor.

The protein localises to the cytoplasm. It catalyses the reaction (S)-4-amino-5-oxopentanoate = 5-aminolevulinate. Its pathway is porphyrin-containing compound metabolism; protoporphyrin-IX biosynthesis; 5-aminolevulinate from L-glutamyl-tRNA(Glu): step 2/2. This Shouchella clausii (strain KSM-K16) (Alkalihalobacillus clausii) protein is Glutamate-1-semialdehyde 2,1-aminomutase 1.